Here is a 404-residue protein sequence, read N- to C-terminus: Coenzyme F420H(2) oxidase (404 aa).

Fe cation contacts are provided by His-83, Glu-85, Asp-87, His-88, His-151, Asp-170, and His-233. The 141-residue stretch at 259–399 (VTVIYDTMHG…ACFEAGRKLA (141 aa)) folds into the Flavodoxin-like domain. FMN contacts are provided by residues 265–270 (TMHGST), 317–320 (TIYD), and 351–356 (SMGGNG).

In the N-terminal section; belongs to the zinc metallo-hydrolase group 3 family. Homodimer. Homotetramer. The tetramer is composed of two functional dimers. The cofactor is FMN. Fe cation is required as a cofactor.

The catalysed reaction is 2 reduced coenzyme F420-(gamma-L-Glu)(n) + O2 = 2 oxidized coenzyme F420-(gamma-L-Glu)(n) + 2 H2O + 2 H(+). In terms of biological role, catalyzes the oxidation of F420H(2) with O(2). May be involved in O(2) detoxification, reducing the intracellular O(2) concentration to a level allowing growth at the expense of methane formation. The polypeptide is Coenzyme F420H(2) oxidase (Methanothermobacter marburgensis (strain ATCC BAA-927 / DSM 2133 / JCM 14651 / NBRC 100331 / OCM 82 / Marburg) (Methanobacterium thermoautotrophicum)).